Here is a 496-residue protein sequence, read N- to C-terminus: uncharacterized protein (496 aa).

A signal peptide spans Met-1–Ala-19. Residues Ala-45–Ala-67 form a helical membrane-spanning segment. A disordered region spans residues Leu-113–Ala-137.

Its subcellular location is the membrane. This is an uncharacterized protein from Nostoc sp. (strain PCC 7120 / SAG 25.82 / UTEX 2576).